A 483-amino-acid chain; its full sequence is Pre-glycoprotein polyprotein GP complex (483 aa).

The N-myristoyl glycine; by host moiety is linked to residue glycine 2. At 2-17 the chain is on the extracellular side; that stretch reads GQLVSFIGEIPAIVHE. The helical transmembrane segment at 18–32 threads the bilayer; that stretch reads ALNVALIAVSIIAIM. Position 33 (lysine 33) is a topological domain, cytoplasmic. A helical transmembrane segment spans residues 34-53; the sequence is GLINIWKSGLFQLIMFLILA. Extracellular-facing segments span residues 54–58 and 59–422; these read GRSCS and ISIG…SLVD. Cysteine 57 lines the Zn(2+) pocket. N-linked (GlcNAc...) asparagine; by host glycosylation is found at asparagine 73, asparagine 88, asparagine 130, and asparagine 179. 5 disulfides stabilise this stretch: cysteine 85/cysteine 223, cysteine 186/cysteine 204, cysteine 269/cysteine 282, cysteine 291/cysteine 300, and cysteine 354/cysteine 375. Asparagine 216 carries N-linked (GlcNAc...) asparagine; by host glycosylation. N-linked (GlcNAc...) asparagine; by host glycosylation is found at asparagine 355, asparagine 363, asparagine 380, and asparagine 385. Residues 423 to 443 form a helical membrane-spanning segment; the sequence is LCFWSTLFYTASIFLHLLHIP. At 444-483 the chain is on the cytoplasmic side; sequence THRHIIGEGCPKPHRLTSDSLCACGFFQLKGRPTRWARIP. Zn(2+) contacts are provided by histidine 445, histidine 447, cysteine 453, histidine 457, cysteine 465, and cysteine 467.

It belongs to the arenaviridae GPC protein family. Homotetramer; disulfide-linked. In terms of assembly, homotetramer. GP2 homotetramers bind through ionic interactions with GP1 homotetramers to form the GP complex together with the stable signal peptide. The GP-C polyprotein interacts with the host protease MBTPS1/SKI-1 resulting in the polyprotein processing. In terms of processing, specific enzymatic cleavages in vivo yield mature proteins. GP-C polyprotein is cleaved in the endoplasmic reticulum by the host protease MBTPS1. Only cleaved glycoprotein is incorporated into virions. The SSP remains stably associated with the GP complex following cleavage by signal peptidase and plays crucial roles in the trafficking of GP through the secretory pathway. Post-translationally, myristoylation is necessary for GP2-mediated fusion activity.

It localises to the virion membrane. The protein localises to the host endoplasmic reticulum membrane. It is found in the host Golgi apparatus membrane. Its subcellular location is the host cell membrane. Its function is as follows. Class I viral fusion protein that directs fusion of viral and host endosomal membranes, leading to delivery of the nucleocapsid into the cytoplasm. Membrane fusion is mediated by irreversible conformational changes induced upon acidification in the endosome. Functionally, stable signal peptide (SSP): cleaved and functions as a signal peptide. In addition, it is also retained as the third component of the GP complex. The SSP is required for efficient glycoprotein expression, post-translational maturation cleavage of GP1 and GP2, glycoprotein transport to the cell surface plasma membrane, formation of infectious virus particles, and acid pH-dependent glycoprotein-mediated cell fusion. In terms of biological role, interacts with the host receptor. The chain is Pre-glycoprotein polyprotein GP complex from Peromyscus californicus (California mouse).